The following is a 790-amino-acid chain: Valine--tRNA ligase (790 aa).

The 'HIGH' region signature appears at 40–50; it reads PTVSGKMHMGH. A 'KMSKS' region motif is present at residues 521-525; it reads KMSKS. Lysine 524 provides a ligand contact to ATP.

The protein belongs to the class-I aminoacyl-tRNA synthetase family. ValS type 2 subfamily.

Its subcellular location is the cytoplasm. The enzyme catalyses tRNA(Val) + L-valine + ATP = L-valyl-tRNA(Val) + AMP + diphosphate. Catalyzes the attachment of valine to tRNA(Val). As ValRS can inadvertently accommodate and process structurally similar amino acids such as threonine, to avoid such errors, it has a 'posttransfer' editing activity that hydrolyzes mischarged Thr-tRNA(Val) in a tRNA-dependent manner. In Thermoplasma volcanium (strain ATCC 51530 / DSM 4299 / JCM 9571 / NBRC 15438 / GSS1), this protein is Valine--tRNA ligase.